A 313-amino-acid chain; its full sequence is Acetaldehyde dehydrogenase 2 (313 aa).

12 to 15 (SGNI) contributes to the NAD(+) binding site. The active-site Acyl-thioester intermediate is the Cys-132. NAD(+)-binding positions include 163-171 (SAGPGTRAN) and Asn-287.

It belongs to the acetaldehyde dehydrogenase family.

It catalyses the reaction acetaldehyde + NAD(+) + CoA = acetyl-CoA + NADH + H(+). This is Acetaldehyde dehydrogenase 2 (amnH) from Paraburkholderia xenovorans (strain LB400).